Consider the following 218-residue polypeptide: Guanylate kinase (218 aa).

Positions 17–196 (GVLLALSSPS…ALEKLNEILH (180 aa)) constitute a Guanylate kinase-like domain. Position 24–31 (24–31 (SPSGAGKT)) interacts with ATP.

The protein belongs to the guanylate kinase family.

The protein resides in the cytoplasm. The enzyme catalyses GMP + ATP = GDP + ADP. Its function is as follows. Essential for recycling GMP and indirectly, cGMP. The sequence is that of Guanylate kinase from Maricaulis maris (strain MCS10) (Caulobacter maris).